The primary structure comprises 2628 residues: Hemagglutinin A (2628 aa).

The N-terminal stretch at 1–24 is a signal peptide; that stretch reads MRKLNSLFSLAVLLSLLCWGQTAA. Peptidase C25-like stretches follow at residues 25 to 539, 540 to 995, 996 to 1451, 1452 to 1907, and 2074 to 2628; these read AQGG…TPPP, GGTS…TPPP, and IDAD…LAVK. 7 disordered regions span residues 493–512, 520–546, 944–1002, 1400–1458, 1856–1881, 1890–1909, and 2336–2358; these read WDAPNGTPNPNPGTTTLSES, SWKTIDADGDGNNWTTTPPPGGTSFAG, KWDA…SFAG, KWDAPNGTPNPNPNPNPGTTTLSESF, KTIDADGDGNNWTTTPPPGG, and SSWKTIDADGDGNNWTTTPPPGG. The span at 496–508 shows a compositional bias: low complexity; the sequence is PNGTPNPNPGTTT.

Belongs to the peptidase C25 family.

Agglutinates erythrocytes. This is Hemagglutinin A (hagA) from Porphyromonas gingivalis (Bacteroides gingivalis).